Consider the following 82-residue polypeptide: Cytochrome b559 subunit alpha (82 aa).

The helical transmembrane segment at 22-36 (IIHAVTLPAIFIAGF) threads the bilayer. Residue H24 coordinates heme.

Belongs to the PsbE/PsbF family. Heterodimer of an alpha subunit and a beta subunit. PSII is composed of 1 copy each of membrane proteins PsbA, PsbB, PsbC, PsbD, PsbE, PsbF, PsbH, PsbI, PsbJ, PsbK, PsbL, PsbM, PsbT, PsbX, PsbY, Psb30/Ycf12, peripheral proteins PsbO, CyanoQ (PsbQ), PsbU, PsbV and a large number of cofactors. It forms dimeric complexes. Requires heme b as cofactor.

The protein localises to the cellular thylakoid membrane. In terms of biological role, this b-type cytochrome is tightly associated with the reaction center of photosystem II (PSII). PSII is a light-driven water:plastoquinone oxidoreductase that uses light energy to abstract electrons from H(2)O, generating O(2) and a proton gradient subsequently used for ATP formation. It consists of a core antenna complex that captures photons, and an electron transfer chain that converts photonic excitation into a charge separation. The sequence is that of Cytochrome b559 subunit alpha from Prochlorococcus marinus (strain MIT 9515).